Consider the following 74-residue polypeptide: Small ribosomal subunit protein uS8c (74 aa).

It belongs to the universal ribosomal protein uS8 family. In terms of assembly, part of the 30S ribosomal subunit.

The protein resides in the plastid. It localises to the chloroplast. Functionally, one of the primary rRNA binding proteins, it binds directly to 16S rRNA central domain where it helps coordinate assembly of the platform of the 30S subunit. The sequence is that of Small ribosomal subunit protein uS8c (rps8) from Oenothera ammophila (Evening primerose).